Here is a 591-residue protein sequence, read N- to C-terminus: ATPase family AAA domain-containing protein 3A (591 aa).

The interval 1-52 (MSWLFGIKGPKGEGTGPPLPLPPAQPGAESGGDRGAGDRPSPKDKWSNFDPT) is disordered. An N-acetylserine modification is found at Ser2. The segment at 2–49 (SWLFGIKGPKGEGTGPPLPLPPAQPGAESGGDRGAGDRPSPKDKWSNF) is required for interaction with the inner surface of the mitochondrial outer membrane. Over 2–245 (SWLFGIKGPK…FRAFVTDWDK (244 aa)) the chain is Mitochondrial intermembrane. Positions 31–47 (GGDRGAGDRPSPKDKWS) are enriched in basic and acidic residues. A coiled-coil region spans residues 55–216 (ERAAKAAREL…REQIRLKAAE (162 aa)). A helical transmembrane segment spans residues 246–263 (VTATVAGLTLLAVGVYSA). The Mitochondrial matrix segment spans residues 264-591 (KNATSVAGRY…KPPHPSLLSC (328 aa)). The segment at 289 to 304 (RISVLEALRHPIQVSR) is S100B-binding. 351 to 358 (GPPGTGKT) provides a ligand contact to ATP. Lys490 carries the N6-acetyllysine; alternate modification. Lys490 is subject to N6-succinyllysine; alternate. N6-acetyllysine is present on residues Lys494 and Lys512.

It belongs to the AAA ATPase family. In terms of assembly, can form homooligomers. Homodimer formation at the N-terminus may be regulated by ATP and is required for the interaction with the inner surface of the mitochondrial outer membrane and correct mitochondrial homeostasis. Interacts with components of the mitochondrial ribosome and with other proteins involved in mitochondrial RNA metabolism. May also interact with protein involved in lipid metabolism, including STARD9. May interact with FAM210A. Interacts with GADD45GIP1. Interacts with S100B in a Ca(+2)- and Zn(+2)-dependent manner; this interaction probably occurs in the cytosol prior to mitochondrial targeting. S100B could assist ATAD3A cytoplasmic processing, preventing aggregation and favoring mitochondrial localization. Interacts with HSP60/HSPD1. Interacts with CLPB. Interacts with EIF2AK3/PERK; ATAD3A and EIF2S1/eIF-2-alpha occupy a common binding site within the cytoplasmic loop of EIF2AK3/PERK, leading to prevent EIF2AK3/PERK association with its substrate EIF2S1/eIF-2-alpha.

Its subcellular location is the mitochondrion inner membrane. The protein localises to the mitochondrion matrix. The protein resides in the mitochondrion nucleoid. It carries out the reaction ATP + H2O = ADP + phosphate + H(+). Its function is as follows. Essential for mitochondrial network organization, mitochondrial metabolism and cell growth at organism and cellular level. May play an important role in mitochondrial protein synthesis. May also participate in mitochondrial DNA replication. May bind to mitochondrial DNA D-loops and contribute to nucleoid stability. Required for enhanced channeling of cholesterol for hormone-dependent steroidogenesis. Involved in mitochondrial-mediated antiviral innate immunity. Required to protect mitochondria from the PERK-mediated unfolded protein response: specifically inhibits the activity of EIF2AK3/PERK at mitochondria-endoplasmic reticulum contact sites, thereby providing a safe haven for mitochondrial protein translation during endoplasmic reticulum stress. Ability to inhibit EIF2AK3/PERK is independent of its ATPase activity. Also involved in the mitochondrial DNA damage response by promoting signaling between damaged genomes and the mitochondrial membrane, leading to activation of the integrated stress response (ISR). The protein is ATPase family AAA domain-containing protein 3A (Atad3a) of Rattus norvegicus (Rat).